The primary structure comprises 934 residues: 3-hydroxy-3-methylglutaryl-coenzyme A reductase (934 aa).

Residues 1–111 lie on the Lumenal side of the membrane; that stretch reads MFYHGASANQ…VLNLVRGAET (111 aa). A helical membrane pass occupies residues 112-132; it reads FDIALVTCAYIAMFYTLFNLF. The 168-residue stretch at 113–280 folds into the SSD domain; sequence DIALVTCAYI…STFLSAILSL (168 aa). Residues 133-141 lie on the Cytoplasmic side of the membrane; it reads ARMRAVGSK. A helical transmembrane segment spans residues 142-162; it reads VWLGLSTLVSSFFAFLFALYI. The Lumenal segment spans residues 163-168; sequence TTRVLD. A helical transmembrane segment spans residues 169–189; sequence LSIPFLSLSEGIPFFVAVVGF. The Cytoplasmic portion of the chain corresponds to 190–231; the sequence is NNKILLAEKVLQNQLNAQSSKNDAPTVLYQALREQGPLLLRD. A helical transmembrane segment spans residues 232–252; that stretch reads HLFMITAFLGCSFYASYLDGL. Over 253-256 the chain is Lumenal; the sequence is KNFC. A helical membrane pass occupies residues 257-277; sequence ILAALILAFDILTTSTFLSAI. Topologically, residues 278–334 are cytoplasmic; sequence LSLKLEINQIHRSTLLREQLEDDGLTETTVDDVLKSNSLAGTKTFTDAPSTLVTVAK. A helical membrane pass occupies residues 335–355; sequence VAGVSVFFGLHFYGFGSAWLS. At 356-421 the chain is on the lumenal side; it reads DLSAGNETND…GLISTAARDK (66 aa). Residues Asn361, Asn364, and Asn382 are each glycosylated (N-linked (GlcNAc...) asparagine). Residues 422–442 form a helical membrane-spanning segment; sequence YISKFILFAFAVSASINVYLL. Over 443-934 the chain is Cytoplasmic; sequence NVARIHTTRL…MQHNRAAAKK (492 aa). The active-site Charge relay system is the Glu618. A CoA-binding site is contributed by 624 to 630; it reads SAMRGCK. NADP(+)-binding positions include 685–687 and 712–720; these read SRF and DAMGMNMIS. The Charge relay system role is filled by Lys752. 781–783 contributes to the CoA binding site; that stretch reads VLK. The Charge relay system role is filled by Asp828. 923–924 is a CoA binding site; the sequence is SH. His924 (proton donor) is an active-site residue. An NADP(+)-binding site is contributed by 928–929; sequence NR.

Belongs to the HMG-CoA reductase family.

The protein resides in the endoplasmic reticulum membrane. The catalysed reaction is (R)-mevalonate + 2 NADP(+) + CoA = (3S)-3-hydroxy-3-methylglutaryl-CoA + 2 NADPH + 2 H(+). Its pathway is metabolic intermediate biosynthesis; (R)-mevalonate biosynthesis; (R)-mevalonate from acetyl-CoA: step 3/3. In terms of biological role, HMG-CoA reductase; part of the first module of ergosterol biosynthesis pathway that includes the early steps of the pathway, conserved across all eukaryotes, and which results in the formation of mevalonate from acetyl-coenzyme A (acetyl-CoA). In this module, the cytosolic acetyl-CoA acetyltransferase catalyzes the formation of acetoacetyl-CoA. The hydroxymethylglutaryl-CoA synthase then condenses acetyl-CoA with acetoacetyl-CoA to form HMG-CoA. The rate-limiting step of the early module is the reduction to mevalonate by the 3-hydroxy-3-methylglutaryl-coenzyme A (HMG-CoA) reductase. In Cyberlindnera jadinii (Torula yeast), this protein is 3-hydroxy-3-methylglutaryl-coenzyme A reductase.